A 228-amino-acid polypeptide reads, in one-letter code: D-lyxose/D-mannose isomerase (228 aa).

Residues His-103, His-105, Glu-110, and His-171 each coordinate Mn(2+).

This sequence belongs to the D-lyxose ketol-isomerase family. Homodimer. Mn(2+) is required as a cofactor.

It catalyses the reaction D-lyxose = D-xylulose. The catalysed reaction is D-mannose = D-fructose. Its function is as follows. Sugar isomerase that catalyzes the reversible isomerization of D-lyxose to D-xylulose, and D-mannose to D-fructose. Shows optimum activity using D-lyxose as substrate, but can also effectively catalyze the isomerization between D-fructose and D-mannose. Shows lower activity with L-gulose, D-talose and L-ribose. The chain is D-lyxose/D-mannose isomerase from Serratia proteamaculans.